A 581-amino-acid polypeptide reads, in one-letter code: Arginine--tRNA ligase (581 aa).

Residues 131-141 (ANPTGPLHVGH) carry the 'HIGH' region motif.

Belongs to the class-I aminoacyl-tRNA synthetase family. Monomer.

The protein resides in the cytoplasm. The enzyme catalyses tRNA(Arg) + L-arginine + ATP = L-arginyl-tRNA(Arg) + AMP + diphosphate. The chain is Arginine--tRNA ligase from Nitrosospira multiformis (strain ATCC 25196 / NCIMB 11849 / C 71).